A 514-amino-acid polypeptide reads, in one-letter code: Na(+)/H(+) antiporter NhaB (514 aa).

Transmembrane regions (helical) follow at residues 23 to 43 (LALLVFLIINPLTFFTNSFVA), 52 to 72 (IFTLAMALKCYPLLPGGLLAI), 97 to 117 (LLLMFMVAGIYFMKQLLLFIF), 120 to 140 (LLLSIRSKMVLSLAFCVAAAF), 144 to 164 (FLDALTVVAVVISVAVGFYGI), 202 to 222 (LMMHAGVGTALGGVMTMVGEP), 238 to 258 (FFLRMSPVTVPVLVCGLLTCM), 303 to 323 (AIIGVWLVTALALHLAEVGLI), 357 to 377 (LTVFFSIVAVIIDQHLFAPII), 391 to 411 (LFYLFNGLLSSISDNVFVGTI), 447 to 467 (ATPNGQAAFLFLLTSALAPLI), and 475 to 495 (VWMALPYTIILTLVGLLCVEF).

This sequence belongs to the NhaB Na(+)/H(+) (TC 2.A.34) antiporter family.

The protein resides in the cell inner membrane. The enzyme catalyses 2 Na(+)(in) + 3 H(+)(out) = 2 Na(+)(out) + 3 H(+)(in). Functionally, na(+)/H(+) antiporter that extrudes sodium in exchange for external protons. The protein is Na(+)/H(+) antiporter NhaB of Salmonella arizonae (strain ATCC BAA-731 / CDC346-86 / RSK2980).